The primary structure comprises 302 residues: GTPase Era (302 aa).

In terms of domain architecture, Era-type G spans 8 to 175 (HSGFVAIIGR…LTTLKGQLPE (168 aa)). The tract at residues 16-23 (GRPNVGKS) is G1. 16–23 (GRPNVGKS) is a binding site for GTP. The interval 42–46 (QTTRN) is G2. The G3 stretch occupies residues 63–66 (DTPG). Residues 63–67 (DTPGI) and 125–128 (NKID) each bind GTP. The segment at 125-128 (NKID) is G4. The segment at 154-156 (ISA) is G5. The 78-residue stretch at 206–283 (TRQEVPHSTA…YLELWVKVQE (78 aa)) folds into the KH type-2 domain.

This sequence belongs to the TRAFAC class TrmE-Era-EngA-EngB-Septin-like GTPase superfamily. Era GTPase family. In terms of assembly, monomer.

It localises to the cytoplasm. It is found in the cell membrane. Functionally, an essential GTPase that binds both GDP and GTP, with rapid nucleotide exchange. Plays a role in 16S rRNA processing and 30S ribosomal subunit biogenesis and possibly also in cell cycle regulation and energy metabolism. This chain is GTPase Era, found in Lactiplantibacillus plantarum (strain ATCC BAA-793 / NCIMB 8826 / WCFS1) (Lactobacillus plantarum).